The primary structure comprises 355 residues: UDP-3-O-acylglucosamine N-acyltransferase (355 aa).

The active-site Proton acceptor is the His258.

The protein belongs to the transferase hexapeptide repeat family. LpxD subfamily. In terms of assembly, homotrimer.

It catalyses the reaction a UDP-3-O-[(3R)-3-hydroxyacyl]-alpha-D-glucosamine + a (3R)-hydroxyacyl-[ACP] = a UDP-2-N,3-O-bis[(3R)-3-hydroxyacyl]-alpha-D-glucosamine + holo-[ACP] + H(+). The protein operates within bacterial outer membrane biogenesis; LPS lipid A biosynthesis. Its function is as follows. Catalyzes the N-acylation of UDP-3-O-acylglucosamine using 3-hydroxyacyl-ACP as the acyl donor. Is involved in the biosynthesis of lipid A, a phosphorylated glycolipid that anchors the lipopolysaccharide to the outer membrane of the cell. The polypeptide is UDP-3-O-acylglucosamine N-acyltransferase (Bradyrhizobium diazoefficiens (strain JCM 10833 / BCRC 13528 / IAM 13628 / NBRC 14792 / USDA 110)).